Here is a 724-residue protein sequence, read N- to C-terminus: Catalase-peroxidase (724 aa).

The segment at 1–26 (MDENKTKPTGKCPVMHGGNTSTGSSN) is disordered. The tryptophyl-tyrosyl-methioninium (Trp-Tyr) (with M-251) cross-link spans 98–225 (WHSAGSYRTT…LAAVQMGLIY (128 aa)). Histidine 99 functions as the Proton acceptor in the catalytic mechanism. Positions 225–251 (YVNPEGVDGKSDPLRTAQDMRVTFSRM) form a cross-link, tryptophyl-tyrosyl-methioninium (Tyr-Met) (with W-98). Histidine 266 provides a ligand contact to heme b.

It belongs to the peroxidase family. Peroxidase/catalase subfamily. In terms of assembly, homodimer or homotetramer. It depends on heme b as a cofactor. Formation of the three residue Trp-Tyr-Met cross-link is important for the catalase, but not the peroxidase activity of the enzyme.

It carries out the reaction H2O2 + AH2 = A + 2 H2O. The enzyme catalyses 2 H2O2 = O2 + 2 H2O. Bifunctional enzyme with both catalase and broad-spectrum peroxidase activity. This chain is Catalase-peroxidase, found in Pectobacterium atrosepticum (strain SCRI 1043 / ATCC BAA-672) (Erwinia carotovora subsp. atroseptica).